The sequence spans 391 residues: Superoxide dismutase [Fe] 1, chloroplastic (391 aa).

A chloroplast-targeting transit peptide spans 1-73 (MAFATLVGVG…GESTNSRVLQ (73 aa)). The span at 87–119 (VNDGIDDETASDAEMDEDAEANGDESSGTDEDA) shows a compositional bias: acidic residues. The segment at 87-120 (VNDGIDDETASDAEMDEDAEANGDESSGTDEDAS) is disordered. Fe cation contacts are provided by histidine 148, histidine 202, aspartate 301, and histidine 305. The segment at 370 to 391 (MPQQVNGDAREQTSGQEKSLGV) is disordered. A compositionally biased stretch (polar residues) spans 381-391 (QTSGQEKSLGV).

It belongs to the iron/manganese superoxide dismutase family. As to quaternary structure, homodimer. Fe cation serves as cofactor.

The protein resides in the plastid. Its subcellular location is the chloroplast. The catalysed reaction is 2 superoxide + 2 H(+) = H2O2 + O2. Functionally, destroys superoxide anion radicals which are normally produced within the cells and which are toxic to biological systems. The polypeptide is Superoxide dismutase [Fe] 1, chloroplastic (Oryza sativa subsp. japonica (Rice)).